The following is a 166-amino-acid chain: 2-C-methyl-D-erythritol 2,4-cyclodiphosphate synthase (166 aa).

A divalent metal cation contacts are provided by aspartate 12 and histidine 14. Residues 12–14 and 38–39 contribute to the 4-CDP-2-C-methyl-D-erythritol 2-phosphate site; these read DVH and HS. Position 46 (histidine 46) interacts with a divalent metal cation. 4-CDP-2-C-methyl-D-erythritol 2-phosphate is bound by residues 60–62, 136–139, phenylalanine 143, and arginine 146; these read DIG and TTSE.

Belongs to the IspF family. Homotrimer. It depends on a divalent metal cation as a cofactor.

The catalysed reaction is 4-CDP-2-C-methyl-D-erythritol 2-phosphate = 2-C-methyl-D-erythritol 2,4-cyclic diphosphate + CMP. It functions in the pathway isoprenoid biosynthesis; isopentenyl diphosphate biosynthesis via DXP pathway; isopentenyl diphosphate from 1-deoxy-D-xylulose 5-phosphate: step 4/6. Its function is as follows. Involved in the biosynthesis of isopentenyl diphosphate (IPP) and dimethylallyl diphosphate (DMAPP), two major building blocks of isoprenoid compounds. Catalyzes the conversion of 4-diphosphocytidyl-2-C-methyl-D-erythritol 2-phosphate (CDP-ME2P) to 2-C-methyl-D-erythritol 2,4-cyclodiphosphate (ME-CPP) with a corresponding release of cytidine 5-monophosphate (CMP). This is 2-C-methyl-D-erythritol 2,4-cyclodiphosphate synthase from Xanthomonas axonopodis pv. citri (strain 306).